A 212-amino-acid polypeptide reads, in one-letter code: MTFVIAIDGPAAAGKGTLSRRIAEQYGFHHLDTGLTYRATAKALMDAGLPLDDEAVAEKTAREVDLSGLDRAVLSEHSIGEAASKIAVMPAVRRALVEAQRAFARKEPGTVLDGRDIGTVVCPDAAVKLYVTASPEVRAKRRHDEIVAGGGKADYTAIFEDVKKRDGRDMGRADSPLRPAEDAHLLDTSEMSIEAAFQAAKTLVDAALKEKI.

ATP is bound at residue 9–17; that stretch reads GPAAAGKGT.

It belongs to the cytidylate kinase family. Type 1 subfamily.

The protein localises to the cytoplasm. It catalyses the reaction CMP + ATP = CDP + ADP. It carries out the reaction dCMP + ATP = dCDP + ADP. This Rhizobium meliloti (strain 1021) (Ensifer meliloti) protein is Cytidylate kinase.